Here is a 94-residue protein sequence, read N- to C-terminus: Large ribosomal subunit protein bL31 (94 aa).

The interval 65 to 94 (YGMADSENDSTDKKKTTNEKKVSDSPSKES) is disordered. Residues 74-94 (STDKKKTTNEKKVSDSPSKES) show a composition bias toward basic and acidic residues.

This sequence belongs to the bacterial ribosomal protein bL31 family. Type A subfamily. Part of the 50S ribosomal subunit.

Binds the 23S rRNA. This Prochlorococcus marinus (strain MIT 9211) protein is Large ribosomal subunit protein bL31.